Reading from the N-terminus, the 277-residue chain is Diaminopimelate epimerase (277 aa).

Residues Asn11 and Asn72 each contribute to the substrate site. Cys81 acts as the Proton donor in catalysis. Substrate contacts are provided by residues 82–83, Asn189, and 207–208; these read GN and ER. Cys217 serves as the catalytic Proton acceptor. 218-219 serves as a coordination point for substrate; the sequence is GT.

It belongs to the diaminopimelate epimerase family. As to quaternary structure, homodimer.

The protein resides in the cytoplasm. The enzyme catalyses (2S,6S)-2,6-diaminopimelate = meso-2,6-diaminopimelate. It functions in the pathway amino-acid biosynthesis; L-lysine biosynthesis via DAP pathway; DL-2,6-diaminopimelate from LL-2,6-diaminopimelate: step 1/1. In terms of biological role, catalyzes the stereoinversion of LL-2,6-diaminopimelate (L,L-DAP) to meso-diaminopimelate (meso-DAP), a precursor of L-lysine and an essential component of the bacterial peptidoglycan. This is Diaminopimelate epimerase from Hydrogenobaculum sp. (strain Y04AAS1).